The primary structure comprises 268 residues: Indole-3-glycerol phosphate synthase 2 (268 aa).

This sequence belongs to the TrpC family.

It carries out the reaction 1-(2-carboxyphenylamino)-1-deoxy-D-ribulose 5-phosphate + H(+) = (1S,2R)-1-C-(indol-3-yl)glycerol 3-phosphate + CO2 + H2O. It participates in amino-acid biosynthesis; L-tryptophan biosynthesis; L-tryptophan from chorismate: step 4/5. The protein is Indole-3-glycerol phosphate synthase 2 (trpC2) of Ralstonia nicotianae (strain ATCC BAA-1114 / GMI1000) (Ralstonia solanacearum).